Consider the following 225-residue polypeptide: NAD(P)H-quinone oxidoreductase subunit K, chloroplastic (225 aa).

Positions 43, 44, 108, and 139 each coordinate [4Fe-4S] cluster.

The protein belongs to the complex I 20 kDa subunit family. As to quaternary structure, NDH is composed of at least 16 different subunits, 5 of which are encoded in the nucleus. [4Fe-4S] cluster is required as a cofactor.

It localises to the plastid. Its subcellular location is the chloroplast thylakoid membrane. The enzyme catalyses a plastoquinone + NADH + (n+1) H(+)(in) = a plastoquinol + NAD(+) + n H(+)(out). It carries out the reaction a plastoquinone + NADPH + (n+1) H(+)(in) = a plastoquinol + NADP(+) + n H(+)(out). NDH shuttles electrons from NAD(P)H:plastoquinone, via FMN and iron-sulfur (Fe-S) centers, to quinones in the photosynthetic chain and possibly in a chloroplast respiratory chain. The immediate electron acceptor for the enzyme in this species is believed to be plastoquinone. Couples the redox reaction to proton translocation, and thus conserves the redox energy in a proton gradient. The polypeptide is NAD(P)H-quinone oxidoreductase subunit K, chloroplastic (Gossypium barbadense (Sea Island cotton)).